The sequence spans 188 residues: Elongation factor P (188 aa).

Lys-34 is modified (N6-(3,6-diaminohexanoyl)-5-hydroxylysine).

It belongs to the elongation factor P family. Post-translationally, may be beta-lysylated on the epsilon-amino group of Lys-34 by the combined action of EpmA and EpmB, and then hydroxylated on the C5 position of the same residue by EpmC (if this protein is present). Lysylation is critical for the stimulatory effect of EF-P on peptide-bond formation. The lysylation moiety may extend toward the peptidyltransferase center and stabilize the terminal 3-CCA end of the tRNA. Hydroxylation of the C5 position on Lys-34 may allow additional potential stabilizing hydrogen-bond interactions with the P-tRNA.

It is found in the cytoplasm. The protein operates within protein biosynthesis; polypeptide chain elongation. Its function is as follows. Involved in peptide bond synthesis. Alleviates ribosome stalling that occurs when 3 or more consecutive Pro residues or the sequence PPG is present in a protein, possibly by augmenting the peptidyl transferase activity of the ribosome. Modification of Lys-34 is required for alleviation. In Photobacterium profundum (strain SS9), this protein is Elongation factor P.